The following is a 225-amino-acid chain: ATP-dependent Clp protease proteolytic subunit (225 aa).

Ser-123 serves as the catalytic Nucleophile. The active site involves His-148.

Belongs to the peptidase S14 family. As to quaternary structure, fourteen ClpP subunits assemble into 2 heptameric rings which stack back to back to give a disk-like structure with a central cavity, resembling the structure of eukaryotic proteasomes.

It localises to the cytoplasm. It catalyses the reaction Hydrolysis of proteins to small peptides in the presence of ATP and magnesium. alpha-casein is the usual test substrate. In the absence of ATP, only oligopeptides shorter than five residues are hydrolyzed (such as succinyl-Leu-Tyr-|-NHMec, and Leu-Tyr-Leu-|-Tyr-Trp, in which cleavage of the -Tyr-|-Leu- and -Tyr-|-Trp bonds also occurs).. Functionally, cleaves peptides in various proteins in a process that requires ATP hydrolysis. Has a chymotrypsin-like activity. Plays a major role in the degradation of misfolded proteins. The protein is ATP-dependent Clp protease proteolytic subunit of Chlorobaculum tepidum (strain ATCC 49652 / DSM 12025 / NBRC 103806 / TLS) (Chlorobium tepidum).